Here is a 470-residue protein sequence, read N- to C-terminus: 3-isopropylmalate dehydratase large subunit (470 aa).

[4Fe-4S] cluster-binding residues include Cys349, Cys409, and Cys412.

It belongs to the aconitase/IPM isomerase family. LeuC type 1 subfamily. In terms of assembly, heterodimer of LeuC and LeuD. [4Fe-4S] cluster is required as a cofactor.

It catalyses the reaction (2R,3S)-3-isopropylmalate = (2S)-2-isopropylmalate. The protein operates within amino-acid biosynthesis; L-leucine biosynthesis; L-leucine from 3-methyl-2-oxobutanoate: step 2/4. Catalyzes the isomerization between 2-isopropylmalate and 3-isopropylmalate, via the formation of 2-isopropylmaleate. The sequence is that of 3-isopropylmalate dehydratase large subunit from Afipia carboxidovorans (strain ATCC 49405 / DSM 1227 / KCTC 32145 / OM5) (Oligotropha carboxidovorans).